The chain runs to 1079 residues: MSEKQTGSANGGLGKTLAQLEQVVSASLRPLPSQTGDGTYVTEQVKTGILKDLSHVDLGDLKTLVDVSKSALTGEALDDRKYIMERVIQLSAGLPSTSQIGKELTNTFLTTLWNDLEHPPISYLGRDAMYRRADGSGNNVLWPHIGAAGTPYARSVQPKTVQSPNLPDPETLFDCLLARKEYKEHPNKISSVLFYIASIIIHDLFETDRKDPAISLTSSYLDLSPLYGNNQQEQDLIRTFKDGKLKPDCFSTKRVLGFPPGVGVVLIMFNRFHNYVVEKLAMINEGGRFTKPQESDTAAYAKYDNDLFQTGRLVTCGLYVNIILKDYVRTILNINRTDSIWSLDPRSEMKDGLLGRAAAQATGNQVAAEFNLVYRWHSCISQRDQKWTEDMYQELFPGQDPSKISLQDFLRGLGRWEAKLPGEPRERPFAGLQRKADGSYDDNDLVKIFEESVEDCAGAFGALHVPTVFRSIEALGIQQARSWNLATLNEFRKYFNLAPYKTFEEINSDPYVADQLKRLYDHPDRVEIYPGIIVEDAKESMAPGSGLCTNFTISRAILSDAVALVRGDRFHTVDFTPKHLTNWAYNEIQPQDSVDQTHVFYKLVLRAFPNHFRGDSIYAHFPLVVPSENKKILTKLGTADKYSWDRPNYTPPPQFINSHSACMSILSDQETFKVTWGSKIEFLMRHNNQPYGRDFMLSGDRTPNAMSRQMMGKALYRDKWETEVKRFYENITLKLLHRYSYKLAGVNQVDVVRDIANLAQVHFCASVFSLPLKTESNPRGIFTESELYQIMAVVFTSIFYDADIGKSFELNQAARAVTQQLGQLTLANVELIAKTGFIANLVNSLHRHDVLSEYGVHMIQRLLDSGMPAPEIVWTHVLPTAGGMVANQAQLFSQSLDYYLSEEGSVHLPEINRLAKEDTTEADDLLLRYFMEGARIRSSVALPRVVAQPTVVEDNGQKITLKQGQHIICNLVSASMDPVTFPEPDKVKLDRDMNLYAHFGFGPHQCLGLGLCKTALTTMLKVIGRLDNLRRAPGGQGKLKKLSGPGGIAMYMTPDQTAFFPFPTTMKIQWDGDLPEVKE.

The segment at Thr-105–Val-446 is linoleate 8R-lipoxygenase. His-202 contributes to the heme b binding site. Tyr-374 is a catalytic residue. His-377 is a binding site for heme b. The segment at Gln-654–Glu-1079 is 9,12-octadecadienoate 8-hydroperoxide 8R-isomerase.

This sequence belongs to the peroxidase family. As to quaternary structure, homotetramer. The cofactor is heme b.

It carries out the reaction (9Z,12Z)-octadecadienoate + O2 = (8R,9Z,12Z)-8-hydroperoxyoctadeca-9,12-dienoate. It catalyses the reaction (8R,9Z,12Z)-8-hydroperoxyoctadeca-9,12-dienoate = (5S,8R,9Z,12Z)-5,8-dihydroxyoctadeca-9,12-dienoate. In terms of biological role, bifunctional heme-containing enzyme that oxidizes linoleic acid to (8R,9Z,12Z)-8-hydroperoxyoctadeca-9,12-dienoate (within the N-terminal heme peroxidase domain), which is subsequently isomerized to (5S,8R,9Z,12Z)-5,8-dihydroxyoctadeca-9,12-dienoate (within the C-terminal P450 heme thiolate domain). Oxidized unsaturated fatty acids, so-called oxylipins, derived from endogenous fatty acids, influence the development of the asexual conidiophores and sexual cleistothecia and regulate the secondary metabolism. These substances were collectively named psi factors and are primarily a mixture of hydroxylated oleic, linoleic and alpha-linolenic acids. They are termed psi-beta, psi-alpha, and psi-gamma, respectively. Oxylipins may also serve as activators of mammalian immune responses contributing to enhanced resistance to opportunistic fungi and as factors that modulate fungal development contributing to resistance to host defenses. The polypeptide is Psi-producing oxygenase A (ppoA) (Aspergillus fumigatus (strain CBS 144.89 / FGSC A1163 / CEA10) (Neosartorya fumigata)).